The primary structure comprises 323 residues: Small ribosomal subunit protein uS3 (323 aa).

The KH type-2 domain maps to 17-86; the sequence is IDEFFADELG…DPQIDVQEVD (70 aa). The interval 251–303 is disordered; the sequence is ADPGVSSEDEEVVTEPVDIGGDDEDVEDIEVVSDDSGNDTETVAEEVEELDAE. A compositionally biased stretch (acidic residues) spans 270 to 303; that stretch reads GGDDEDVEDIEVVSDDSGNDTETVAEEVEELDAE.

It belongs to the universal ribosomal protein uS3 family. Part of the 30S ribosomal subunit.

Binds the lower part of the 30S subunit head. This Haloquadratum walsbyi (strain DSM 16790 / HBSQ001) protein is Small ribosomal subunit protein uS3.